The sequence spans 127 residues: MAFKYWFVFAAVLYARQWLSTKCEVPQMTSSSAPDLEEEDDYTAYAPLTCYFTNSTLGLLAPPNCSVLCNSTTTWFNETSPNNASCLLTVDFLTQDAILQENQPYNCSVGHCDNGTCAGPPRHAQCW.

The N-terminal stretch at 1–23 is a signal peptide; sequence MAFKYWFVFAAVLYARQWLSTKC. Cystine bridges form between Cys-50–Cys-69, Cys-65–Cys-112, Cys-86–Cys-117, and Cys-107–Cys-126. N-linked (GlcNAc...) asparagine glycosylation is found at Asn-54, Asn-64, Asn-70, Asn-77, Asn-83, Asn-106, and Asn-114.

The protein belongs to the evasin C8 family. In terms of assembly, monomer.

It is found in the secreted. Salivary chemokine-binding protein which has chemokine-neutralizing activity and binds to host chemokines CCL1, CCL3, CCL5, CCL7, CCL8, CCL11, CCL14, CCL15, CCL16, CCL17, CCL18, CCL19, CCL21, CCL22, CCL23, CCL24, CCL25 and CCL26 with nanomolar affinity. Binds to CCL3 and CCL5 with 1:1 stoichiometry. Although binding to CCL25 is observed, does not inhibit CCL25-induced chemotaxis. Has been shown to reduce cardiac injury and inflammation in mice through its anti-CCL5 activity. This Rhipicephalus sanguineus (Brown dog tick) protein is Evasin-4.